The primary structure comprises 494 residues: Guanosine-5'-triphosphate,3'-diphosphate pyrophosphatase (494 aa).

It belongs to the GppA/Ppx family. GppA subfamily.

The catalysed reaction is guanosine 3'-diphosphate 5'-triphosphate + H2O = guanosine 3',5'-bis(diphosphate) + phosphate + H(+). Its pathway is purine metabolism; ppGpp biosynthesis; ppGpp from GTP: step 2/2. Its function is as follows. Catalyzes the conversion of pppGpp to ppGpp. Guanosine pentaphosphate (pppGpp) is a cytoplasmic signaling molecule which together with ppGpp controls the 'stringent response', an adaptive process that allows bacteria to respond to amino acid starvation, resulting in the coordinated regulation of numerous cellular activities. The protein is Guanosine-5'-triphosphate,3'-diphosphate pyrophosphatase of Escherichia coli (strain 55989 / EAEC).